The following is a 428-amino-acid chain: Enolase (428 aa).

Glutamine 165 is a (2R)-2-phosphoglycerate binding site. Glutamate 207 acts as the Proton donor in catalysis. Aspartate 244, glutamate 285, and aspartate 312 together coordinate Mg(2+). (2R)-2-phosphoglycerate is bound by residues lysine 337, arginine 366, serine 367, and lysine 388. Lysine 337 (proton acceptor) is an active-site residue.

Belongs to the enolase family. In terms of assembly, component of the RNA degradosome, a multiprotein complex involved in RNA processing and mRNA degradation. Requires Mg(2+) as cofactor.

It localises to the cytoplasm. The protein resides in the secreted. Its subcellular location is the cell surface. It carries out the reaction (2R)-2-phosphoglycerate = phosphoenolpyruvate + H2O. It participates in carbohydrate degradation; glycolysis; pyruvate from D-glyceraldehyde 3-phosphate: step 4/5. In terms of biological role, catalyzes the reversible conversion of 2-phosphoglycerate (2-PG) into phosphoenolpyruvate (PEP). It is essential for the degradation of carbohydrates via glycolysis. The sequence is that of Enolase from Coxiella burnetii (strain CbuK_Q154) (Coxiella burnetii (strain Q154)).